The following is a 444-amino-acid chain: Tol-Pal system protein TolB (444 aa).

A signal peptide spans M1–A19.

This sequence belongs to the TolB family. As to quaternary structure, the Tol-Pal system is composed of five core proteins: the inner membrane proteins TolA, TolQ and TolR, the periplasmic protein TolB and the outer membrane protein Pal. They form a network linking the inner and outer membranes and the peptidoglycan layer.

It localises to the periplasm. Functionally, part of the Tol-Pal system, which plays a role in outer membrane invagination during cell division and is important for maintaining outer membrane integrity. This chain is Tol-Pal system protein TolB, found in Rickettsia felis (strain ATCC VR-1525 / URRWXCal2) (Rickettsia azadi).